Reading from the N-terminus, the 237-residue chain is MRPSKRAADAMRDVTLERAVARYAEGSCLVTFGNTRVLCTASLEERGPPWLRGSGKGWVTAEYAMLPRATHERTRREVNSGKPSGRTQEIQRLIGRSLRAVTNLPALGERQITVDCDVIQADGGTRTASITGAWVALHDCFAWMRARSIISVDPLKDHVAAVSCGIYKGQPVLDLDYAEDSAAETDANFVVTGKGGIVEVQGTAEMEPFTDEQFLELLRLAKGGVAGLVELQRKAIA.

Phosphate is bound by residues Arg86 and 124–126 (GTR).

It belongs to the RNase PH family. As to quaternary structure, homohexameric ring arranged as a trimer of dimers.

The catalysed reaction is tRNA(n+1) + phosphate = tRNA(n) + a ribonucleoside 5'-diphosphate. Functionally, phosphorolytic 3'-5' exoribonuclease that plays an important role in tRNA 3'-end maturation. Removes nucleotide residues following the 3'-CCA terminus of tRNAs; can also add nucleotides to the ends of RNA molecules by using nucleoside diphosphates as substrates, but this may not be physiologically important. Probably plays a role in initiation of 16S rRNA degradation (leading to ribosome degradation) during starvation. The protein is Ribonuclease PH of Methylorubrum extorquens (strain PA1) (Methylobacterium extorquens).